Reading from the N-terminus, the 477-residue chain is Ribulose bisphosphate carboxylase large chain (477 aa).

Residues 1–2 constitute a propeptide that is removed on maturation; it reads MS. An N-acetylproline modification is found at P3. K14 is subject to N6,N6,N6-trimethyllysine. 2 residues coordinate substrate: N123 and T173. The active-site Proton acceptor is K175. K177 contributes to the substrate binding site. K201, D203, and E204 together coordinate Mg(2+). Position 201 is an N6-carboxylysine (K201). Catalysis depends on H294, which acts as the Proton acceptor. The substrate site is built by R295, H327, and S379.

The protein belongs to the RuBisCO large chain family. Type I subfamily. As to quaternary structure, heterohexadecamer of 8 large chains and 8 small chains; disulfide-linked. The disulfide link is formed within the large subunit homodimers. The cofactor is Mg(2+). The disulfide bond which can form in the large chain dimeric partners within the hexadecamer appears to be associated with oxidative stress and protein turnover.

It is found in the plastid. The protein resides in the chloroplast. It catalyses the reaction 2 (2R)-3-phosphoglycerate + 2 H(+) = D-ribulose 1,5-bisphosphate + CO2 + H2O. It carries out the reaction D-ribulose 1,5-bisphosphate + O2 = 2-phosphoglycolate + (2R)-3-phosphoglycerate + 2 H(+). RuBisCO catalyzes two reactions: the carboxylation of D-ribulose 1,5-bisphosphate, the primary event in carbon dioxide fixation, as well as the oxidative fragmentation of the pentose substrate in the photorespiration process. Both reactions occur simultaneously and in competition at the same active site. The polypeptide is Ribulose bisphosphate carboxylase large chain (Digitalis purpurea (Common foxglove)).